The chain runs to 119 residues: uncharacterized protein (119 aa).

Helical transmembrane passes span 52–72 (IVLFVLGFLLLIPWIINVINI) and 88–108 (VLFSLSIAIIVIFVIFFIFLI).

The protein localises to the membrane. This is an uncharacterized protein from Dictyostelium discoideum (Social amoeba).